Consider the following 607-residue polypeptide: Granule-bound starch synthase 1, chloroplastic/amyloplastic (607 aa).

A chloroplast-targeting transit peptide spans 1–77 (MASITASHHF…RPGCSATIVC (77 aa)). Lysine 95 lines the ADP-alpha-D-glucose pocket. The disordered stretch occupies residues 585–607 (SGSEPGVEGEEIAPLAKENVATP).

It belongs to the glycosyltransferase 1 family. Bacterial/plant glycogen synthase subfamily.

The protein localises to the plastid. It localises to the chloroplast. The protein resides in the amyloplast. It carries out the reaction an NDP-alpha-D-glucose + [(1-&gt;4)-alpha-D-glucosyl](n) = [(1-&gt;4)-alpha-D-glucosyl](n+1) + a ribonucleoside 5'-diphosphate + H(+). The protein operates within glycan biosynthesis; starch biosynthesis. The polypeptide is Granule-bound starch synthase 1, chloroplastic/amyloplastic (WAXY) (Solanum tuberosum (Potato)).